A 246-amino-acid chain; its full sequence is uncharacterized protein (246 aa).

A helical membrane pass occupies residues 7–29; that stretch reads GRGALASTGGCVVLAVAALMFVF.

It is found in the membrane. This is an uncharacterized protein from Treponema pallidum (strain Nichols).